Here is a 184-residue protein sequence, read N- to C-terminus: Female-specific protein transformer (184 aa).

Basic and acidic residues-rich tracts occupy residues 1-39 and 49-58; these read MKMDADSSGTEHRDSRGSRSRSWREREHHGRTSERDSRK and DEVREQDRIR. Disordered regions lie at residues 1–123 and 146–184; these read MKMD…PKII and YQRLPRPPPFPPAPFRYRQRQPFMGAPRFGYRNAGRPPY. Basic residues-rich tracts occupy residues 59–75 and 84–114; these read SLRQRAHQSTRRTRSRS and SRHRRHRQRSRSRNRSRSRSSERRRRQRSPH. Over residues 150–159 the composition is skewed to pro residues; that stretch reads PRPPPFPPAP.

The protein localises to the nucleus speckle. In terms of biological role, member of the regulatory pathway controlling female somatic sexual differentiation, regulated by Sxl. Activates dsx female-specific splicing by promoting the formation of a splicing enhancer complex which consists of tra, tra2 and sr proteins. The sequence is that of Female-specific protein transformer (tra) from Drosophila simulans (Fruit fly).